The sequence spans 213 residues: tRNA (guanine-N(7)-)-methyltransferase (213 aa).

Positions 40, 65, 92, and 118 each coordinate S-adenosyl-L-methionine. Residue aspartate 118 is part of the active site. Residues lysine 122 and aspartate 154 each contribute to the substrate site.

It belongs to the class I-like SAM-binding methyltransferase superfamily. TrmB family.

It carries out the reaction guanosine(46) in tRNA + S-adenosyl-L-methionine = N(7)-methylguanosine(46) in tRNA + S-adenosyl-L-homocysteine. Its pathway is tRNA modification; N(7)-methylguanine-tRNA biosynthesis. Functionally, catalyzes the formation of N(7)-methylguanine at position 46 (m7G46) in tRNA. The sequence is that of tRNA (guanine-N(7)-)-methyltransferase from Synechococcus elongatus (strain ATCC 33912 / PCC 7942 / FACHB-805) (Anacystis nidulans R2).